An 88-amino-acid chain; its full sequence is DNA-directed RNA polymerase subunit omega (88 aa).

The protein belongs to the RNA polymerase subunit omega family. The RNAP catalytic core consists of 2 alpha, 1 beta, 1 beta' and 1 omega subunit. When a sigma factor is associated with the core the holoenzyme is formed, which can initiate transcription.

The catalysed reaction is RNA(n) + a ribonucleoside 5'-triphosphate = RNA(n+1) + diphosphate. In terms of biological role, promotes RNA polymerase assembly. Latches the N- and C-terminal regions of the beta' subunit thereby facilitating its interaction with the beta and alpha subunits. The polypeptide is DNA-directed RNA polymerase subunit omega (Yersinia pestis (strain Pestoides F)).